The following is a 211-amino-acid chain: Uracil phosphoribosyltransferase (211 aa).

5-phospho-alpha-D-ribose 1-diphosphate is bound by residues arginine 79, arginine 104, and 131 to 139; that span reads DPMLATGGS. Uracil-binding positions include isoleucine 196 and 201 to 203; that span reads GDA. Residue aspartate 202 participates in 5-phospho-alpha-D-ribose 1-diphosphate binding.

It belongs to the UPRTase family. Mg(2+) serves as cofactor.

It carries out the reaction UMP + diphosphate = 5-phospho-alpha-D-ribose 1-diphosphate + uracil. It functions in the pathway pyrimidine metabolism; UMP biosynthesis via salvage pathway; UMP from uracil: step 1/1. Allosterically activated by GTP. Its function is as follows. Catalyzes the conversion of uracil and 5-phospho-alpha-D-ribose 1-diphosphate (PRPP) to UMP and diphosphate. This chain is Uracil phosphoribosyltransferase, found in Limosilactobacillus fermentum (strain NBRC 3956 / LMG 18251) (Lactobacillus fermentum).